The sequence spans 427 residues: Glutamate-1-semialdehyde 2,1-aminomutase (427 aa).

K265 carries the post-translational modification N6-(pyridoxal phosphate)lysine.

This sequence belongs to the class-III pyridoxal-phosphate-dependent aminotransferase family. HemL subfamily. Homodimer. Requires pyridoxal 5'-phosphate as cofactor.

The protein localises to the cytoplasm. The enzyme catalyses (S)-4-amino-5-oxopentanoate = 5-aminolevulinate. Its pathway is porphyrin-containing compound metabolism; protoporphyrin-IX biosynthesis; 5-aminolevulinate from L-glutamyl-tRNA(Glu): step 2/2. The sequence is that of Glutamate-1-semialdehyde 2,1-aminomutase from Burkholderia pseudomallei (strain 1710b).